The sequence spans 234 residues: Leucyl/phenylalanyl-tRNA--protein transferase (234 aa).

The protein belongs to the L/F-transferase family.

It is found in the cytoplasm. The enzyme catalyses N-terminal L-lysyl-[protein] + L-leucyl-tRNA(Leu) = N-terminal L-leucyl-L-lysyl-[protein] + tRNA(Leu) + H(+). The catalysed reaction is N-terminal L-arginyl-[protein] + L-leucyl-tRNA(Leu) = N-terminal L-leucyl-L-arginyl-[protein] + tRNA(Leu) + H(+). It carries out the reaction L-phenylalanyl-tRNA(Phe) + an N-terminal L-alpha-aminoacyl-[protein] = an N-terminal L-phenylalanyl-L-alpha-aminoacyl-[protein] + tRNA(Phe). Functionally, functions in the N-end rule pathway of protein degradation where it conjugates Leu, Phe and, less efficiently, Met from aminoacyl-tRNAs to the N-termini of proteins containing an N-terminal arginine or lysine. In Shigella flexneri serotype 5b (strain 8401), this protein is Leucyl/phenylalanyl-tRNA--protein transferase.